The following is a 231-amino-acid chain: Thrombin-like enzyme leucurobin (231 aa).

Residues 1–223 (VIGGDECDIN…YLPWIQSIIA (223 aa)) form the Peptidase S1 domain. Cystine bridges form between C7–C139, C26–C42, C74–C230, C118–C184, C150–C163, and C174–C199. Residues H41 and D86 each act as charge relay system in the active site. An N-linked (GlcNAc...) asparagine glycan is attached at N146. S178 (charge relay system) is an active-site residue. N225 carries N-linked (GlcNAc...) asparagine glycosylation.

This sequence belongs to the peptidase S1 family. Snake venom subfamily. As to quaternary structure, monomer. In terms of processing, glycosylated. As to expression, expressed by the venom gland.

The protein localises to the secreted. The enzyme catalyses Selective cleavage of Arg-|-Xaa bond in fibrinogen, to form fibrin, and release fibrinopeptide A. The specificity of further degradation of fibrinogen varies with species origin of the enzyme.. With respect to regulation, inhibited by PMSF and benzamidine. Its clotting effect is strongly inhibited by antibothropic serum. Is not inhibited by heparin. Functionally, thrombin-like snake venom serine protease that cleaves Arg-Gly bonds in alpha-chain of fibrinogen (FGA). Induces temporary episodes of opisthotonos and rapid rolling around the long axis of the animal (gyroxin-like effect), when injected into the tail veins of mice (0.143 ug/g mouse). This chain is Thrombin-like enzyme leucurobin, found in Bothrops leucurus (Whitetail lancehead).